A 152-amino-acid chain; its full sequence is 3-hydroxyacyl-[acyl-carrier-protein] dehydratase FabZ (152 aa).

Histidine 58 is an active-site residue.

It belongs to the thioester dehydratase family. FabZ subfamily.

The protein resides in the cytoplasm. The enzyme catalyses a (3R)-hydroxyacyl-[ACP] = a (2E)-enoyl-[ACP] + H2O. In terms of biological role, involved in unsaturated fatty acids biosynthesis. Catalyzes the dehydration of short chain beta-hydroxyacyl-ACPs and long chain saturated and unsaturated beta-hydroxyacyl-ACPs. The sequence is that of 3-hydroxyacyl-[acyl-carrier-protein] dehydratase FabZ from Prochlorococcus marinus (strain MIT 9215).